The sequence spans 81 residues: LYR motif-containing protein At3g19508 (81 aa).

It belongs to the complex I LYR family. LYRM9 subfamily.

The sequence is that of LYR motif-containing protein At3g19508 from Arabidopsis thaliana (Mouse-ear cress).